The following is a 444-amino-acid chain: Glutamyl-tRNA reductase (444 aa).

Residues 49–52 (TCNR), S109, 114–116 (ETQ), and Q120 each bind substrate. The active-site Nucleophile is the C50. 189 to 194 (GAGKMG) serves as a coordination point for NADP(+).

This sequence belongs to the glutamyl-tRNA reductase family. In terms of assembly, homodimer.

It catalyses the reaction (S)-4-amino-5-oxopentanoate + tRNA(Glu) + NADP(+) = L-glutamyl-tRNA(Glu) + NADPH + H(+). The protein operates within porphyrin-containing compound metabolism; protoporphyrin-IX biosynthesis; 5-aminolevulinate from L-glutamyl-tRNA(Glu): step 1/2. Functionally, catalyzes the NADPH-dependent reduction of glutamyl-tRNA(Glu) to glutamate 1-semialdehyde (GSA). The polypeptide is Glutamyl-tRNA reductase (Bacillus cereus (strain G9842)).